The primary structure comprises 87 residues: Xibalbin-2 (87 aa).

A signal peptide spans 1–25 (MKGVCTRKVLYFFMAVILFVAIVAS). Positions 26-45 (EDTENRNPAMAMPLQRMEQE) are excised as a propeptide.

It belongs to the xibalbin-2 family. Contains 5 disulfide bonds. As to expression, expressed by the venom gland. Not found in the whole body.

It is found in the secreted. Functionally, probable neurotoxin. Moderately inhibits voltage-gated potassium channels (Kv1.1/KCNA1, Kv1.2/KCNA2, Kv1.3/KCNA3, and Kv1.6/KCNA6, with the highest toxicity against Kv1.6 (73.2% inhibition at 1 uM)) and weakly inhibits sodium channels (Nav1.4/SCN4A). Does not activate protein kinase A type II (PKA-II) and MAP kinase Erk1/2 in sensory neurons. Does not show cytotoxic activity. Does not have an impact on Ca2+, cAMP, and NO signaling in the cell types analyzed. Does not interfere with the adhesion of leukocytes to endothelial cells. In terms of biological role, moderately inhibits voltage-gated potassium channels (Kv1.1/KCNA1, Kv1.2/KCNA2, Kv1.3/KCNA3, and Kv1.6/KCNA6, with the highest toxicity against Kv1.6 (75.9% inhibition at 1 uM)). Does not activate protein kinase A type II (PKA-II) and MAP kinase Erk1/2 in sensory neurons. Does not show cytotoxic activity. Does not have an impact on Ca2+, cAMP, and NO signaling in the cell types analyzed. Does not interfere with the adhesion of leukocytes to endothelial cells. This Xibalbanus tulumensis (Blind cave remipede) protein is Xibalbin-2.